The following is a 189-amino-acid chain: UPF0398 protein BH1768 (189 aa).

This sequence belongs to the UPF0398 family.

The polypeptide is UPF0398 protein BH1768 (Halalkalibacterium halodurans (strain ATCC BAA-125 / DSM 18197 / FERM 7344 / JCM 9153 / C-125) (Bacillus halodurans)).